A 377-amino-acid polypeptide reads, in one-letter code: PqqA peptide cyclase (377 aa).

The Radical SAM core domain maps to 12 to 228 (FGIPLAVLLE…EAARERLKGQ (217 aa)). Cys26, Cys30, and Cys33 together coordinate [4Fe-4S] cluster.

The protein belongs to the radical SAM superfamily. PqqE family. In terms of assembly, interacts with PqqD. The interaction is necessary for activity of PqqE. The cofactor is [4Fe-4S] cluster.

It carries out the reaction [PQQ precursor protein] + S-adenosyl-L-methionine = E-Y cross-linked-[PQQ precursor protein] + 5'-deoxyadenosine + L-methionine + H(+). It functions in the pathway cofactor biosynthesis; pyrroloquinoline quinone biosynthesis. Functionally, catalyzes the cross-linking of a glutamate residue and a tyrosine residue in the PqqA protein as part of the biosynthesis of pyrroloquinoline quinone (PQQ). In Rhodopseudomonas palustris (strain ATCC BAA-98 / CGA009), this protein is PqqA peptide cyclase.